We begin with the raw amino-acid sequence, 126 residues long: Adult-specific rigid cuticular protein 12.4 (126 aa).

The Chitin-binding type R&amp;R domain occupies 9–87 (GGAYNFGFNT…AMAALAPKAP (79 aa)).

Component of the rigid cuticle of the spider. In Araneus diadematus (European garden spider), this protein is Adult-specific rigid cuticular protein 12.4.